A 396-amino-acid polypeptide reads, in one-letter code: Ribosomal RNA large subunit methyltransferase I (396 aa).

The region spanning 2–81 (TVRLILAKGR…EVIDCAFFIR (80 aa)) is the PUA domain.

This sequence belongs to the methyltransferase superfamily. RlmI family.

Its subcellular location is the cytoplasm. The enzyme catalyses cytidine(1962) in 23S rRNA + S-adenosyl-L-methionine = 5-methylcytidine(1962) in 23S rRNA + S-adenosyl-L-homocysteine + H(+). Its function is as follows. Specifically methylates the cytosine at position 1962 (m5C1962) of 23S rRNA. This Yersinia pseudotuberculosis serotype O:1b (strain IP 31758) protein is Ribosomal RNA large subunit methyltransferase I.